An 87-amino-acid chain; its full sequence is DNA-directed RNA polymerase subunit omega (87 aa).

Belongs to the RNA polymerase subunit omega family. The RNAP catalytic core consists of 2 alpha, 1 beta, 1 beta' and 1 omega subunit. When a sigma factor is associated with the core the holoenzyme is formed, which can initiate transcription.

It carries out the reaction RNA(n) + a ribonucleoside 5'-triphosphate = RNA(n+1) + diphosphate. Promotes RNA polymerase assembly. Latches the N- and C-terminal regions of the beta' subunit thereby facilitating its interaction with the beta and alpha subunits. In Pseudomonas fluorescens (strain SBW25), this protein is DNA-directed RNA polymerase subunit omega.